The chain runs to 169 residues: MKKWMLAICLMFINGICEAADCFDLAGRDYKIDPDLLRAISWKESRYRVNAIGINPVTGYGSGLMQVDSQHFNELARYGIKPEHLTTDPCMNIYTGAYYLAIAFKKWGVSWEAVGAYNAGFRKTERQNQRRLAYASEVYRIYTWIKSSKGIRVPTTKKSLSQINSVQKN.

Belongs to the IagB/IpgF/P19 family.

The polypeptide is X polypeptide (X) (Escherichia coli).